We begin with the raw amino-acid sequence, 110 residues long: Defensin-like protein 296 (110 aa).

A signal peptide spans 1–28; sequence MASKITIFFVLALVVVCTMMVCIPTATA. 6 disulfides stabilise this stretch: cysteine 34-cysteine 52, cysteine 40-cysteine 57, cysteine 45-cysteine 59, cysteine 81-cysteine 102, cysteine 87-cysteine 107, and cysteine 95-cysteine 109.

It belongs to the DEFL family.

Its subcellular location is the secreted. This is Defensin-like protein 296 from Arabidopsis thaliana (Mouse-ear cress).